A 630-amino-acid chain; its full sequence is Probable potassium transport system protein Kup 1 (630 aa).

A run of 12 helical transmembrane segments spans residues 15–35 (FAAL…TSPL), 59–79 (LSLI…TFIM), 109–129 (WIMI…MVTP), 145–165 (PALK…LFFV), 173–193 (VGAF…LLGV), 223–243 (LVAM…YADM), 255–275 (WFAF…ALIL), 297–317 (LVGL…SGAF), 345–365 (IYLP…VLGF), 374–394 (AYGI…TVVV), 405–425 (AGLL…ANIL), and 427–447 (IPDG…LMTT).

The protein belongs to the HAK/KUP transporter (TC 2.A.72) family.

The protein localises to the cell inner membrane. The catalysed reaction is K(+)(in) + H(+)(in) = K(+)(out) + H(+)(out). Transport of potassium into the cell. Likely operates as a K(+):H(+) symporter. This chain is Probable potassium transport system protein Kup 1, found in Dechloromonas aromatica (strain RCB).